Reading from the N-terminus, the 359-residue chain is Replication-associated protein (359 aa).

Residues 18–121 enclose the CRESS-DNA virus Rep endonuclease domain; it reads RHRNANTFLT…PKDKWEKGTY (104 aa). Positions 25–28 match the RCR-1 motif; the sequence is FLTY. The a divalent metal cation site is built by Glu59, His67, and His69. Positions 67–69 match the RCR-2 motif; it reads HCH. Tyr107 serves as the catalytic For DNA cleavage activity. The RCR-3 motif lies at 107 to 110; that stretch reads YILK. Asp111 serves as a coordination point for a divalent metal cation. Positions 181–193 are oligomerization; the sequence is SASRLFPDIAEPY. 235 to 242 lines the ATP pocket; the sequence is GPTRTGKT. The tract at residues 258–276 is transactivation; that stretch reads IDWSSYDEEAQYNVVDDIP. The short motif at 298–309 is the Nuclear localization signal element; that stretch reads KYGKRRKVASKS.

The protein belongs to the geminiviridae Rep protein family. As to quaternary structure, homooligomer. Rep binds to repeated DNA motifs (iterons). Forms the O-complex, which is a Rep-DNA complex involved in the initiation of RCR. Part of the C- and V-complexes which are RepA-Rep-DNA complexes involved in the c-sense and v-sense transcription. Mg(2+) is required as a cofactor. It depends on Mn(2+) as a cofactor.

Its subcellular location is the host nucleus. Functionally, essential for the replication of viral ssDNA. The closed circular ssDNA genome is first converted to a superhelical dsDNA. Rep binds a specific region at the genome origin of replication. It introduces an endonucleolytic nick within the conserved sequence 5'-TAATATTAC-3' in the intergenic region of the genome present in all geminiviruses, thereby initiating the rolling circle replication (RCR). Following cleavage, binds covalently to the 5'-phosphate of DNA as a tyrosyl ester. The cleavage gives rise to a free 3'-OH that serves as a primer for the cellular DNA polymerase. The polymerase synthesizes the (+) strand DNA by rolling circle mechanism. After one round of replication, a Rep-catalyzed nucleotidyl transfer reaction releases a circular single-stranded virus genome, thereby terminating the replication. Displays origin-specific DNA cleavage, nucleotidyl transferase, ATPase and helicase activities. Acts as an inhibitor of C-sense gene transcription. In Megathyrsus maximus (PanSV), this protein is Replication-associated protein.